The chain runs to 76 residues: Horsegram inhibitor 1 (76 aa).

7 disulfide bridges follow: Cys-16–Cys-70, Cys-17–Cys-32, Cys-20–Cys-66, Cys-22–Cys-30, Cys-40–Cys-47, Cys-44–Cys-59, and Cys-49–Cys-57.

It belongs to the Bowman-Birk serine protease inhibitor family. As to quaternary structure, HGI-III exists in a state of equilibrium between monomer, homodimer and trimer, with homodimer being the predominant form. The homodimer is stabilized by the non-covalent interaction between Lys-24 of one subunit and Asp-76 of the other subunit. The homodimer is more thermostable than the monomer. HGGI-I, HGGI-II and HGGI-III exist as monomers. Post-translationally, HGGI-I, HGGI-II and HGGI-III are produced by proteolysis of the N- and C-termini of HGI-III.

Inhibitors of trypsin and chymotrypsin. HGGI-III has a higher activity than HGGI-I or HGGI-II. In Vigna unguiculata subsp. cylindrica (Horse gram), this protein is Horsegram inhibitor 1.